Consider the following 426-residue polypeptide: Dihydrofolate synthase/folylpolyglutamate synthase (426 aa).

58 to 61 (GKGS) is an ATP binding site. Ser82 provides a ligand contact to Mg(2+). 121-124 (TRFE) is a binding site for 7,8-dihydropteroate. Glu145 contributes to the Mg(2+) binding site. 152–154 (LDA) lines the 7,8-dihydropteroate pocket. His172 contributes to the Mg(2+) binding site. Residues Arg289 and Asp302 each coordinate ATP.

The protein belongs to the folylpolyglutamate synthase family. Monomer. The cofactor is Mg(2+).

It carries out the reaction 7,8-dihydropteroate + L-glutamate + ATP = 7,8-dihydrofolate + ADP + phosphate + H(+). The catalysed reaction is (6S)-5,6,7,8-tetrahydrofolyl-(gamma-L-Glu)(n) + L-glutamate + ATP = (6S)-5,6,7,8-tetrahydrofolyl-(gamma-L-Glu)(n+1) + ADP + phosphate + H(+). It catalyses the reaction 10-formyltetrahydrofolyl-(gamma-L-Glu)(n) + L-glutamate + ATP = 10-formyltetrahydrofolyl-(gamma-L-Glu)(n+1) + ADP + phosphate + H(+). The enzyme catalyses (6R)-5,10-methylenetetrahydrofolyl-(gamma-L-Glu)(n) + L-glutamate + ATP = (6R)-5,10-methylenetetrahydrofolyl-(gamma-L-Glu)(n+1) + ADP + phosphate + H(+). Its pathway is cofactor biosynthesis; tetrahydrofolate biosynthesis; 7,8-dihydrofolate from 2-amino-4-hydroxy-6-hydroxymethyl-7,8-dihydropteridine diphosphate and 4-aminobenzoate: step 2/2. The protein operates within cofactor biosynthesis; tetrahydrofolylpolyglutamate biosynthesis. Its function is as follows. Functions in two distinct reactions of the de novo folate biosynthetic pathway. Catalyzes the addition of a glutamate residue to dihydropteroate (7,8-dihydropteroate or H2Pte) to form dihydrofolate (7,8-dihydrofolate monoglutamate or H2Pte-Glu). Also catalyzes successive additions of L-glutamate to tetrahydrofolate or 10-formyltetrahydrofolate or 5,10-methylenetetrahydrofolate, leading to folylpolyglutamate derivatives. In Buchnera aphidicola subsp. Baizongia pistaciae (strain Bp), this protein is Dihydrofolate synthase/folylpolyglutamate synthase (folC).